Consider the following 172-residue polypeptide: Peptide deformylase-like (172 aa).

Glu134 is a catalytic residue.

The protein belongs to the polypeptide deformylase family.

In Rhizobium meliloti (strain 1021) (Ensifer meliloti), this protein is Peptide deformylase-like.